The primary structure comprises 99 residues: Orphan antixoxin protein TacA (99 aa).

Belongs to the TacA antitoxin family.

Functionally, putative antitoxin component of a toxin-antitoxin (TA) system; its cognate toxin (usually a tRNA acetylase) is unknown. In Haemophilus influenzae (strain ATCC 51907 / DSM 11121 / KW20 / Rd), this protein is Orphan antixoxin protein TacA.